The primary structure comprises 643 residues: Versicolorin B synthase (643 aa).

A propeptide spanning residues 1 to 41 is cleaved from the precursor; the sequence is MGRNWFQVTAMAVVPVVGIMAAVNPTILSSAASSLPSLGAM. Residues 84–85 and 105–106 each bind FAD; these read TA and EA. An N-linked (GlcNAc...) asparagine glycan is attached at N116. Residue 171-174 participates in FAD binding; sequence GAML. N221 and N507 each carry an N-linked (GlcNAc...) asparagine glycan. Residues A613 and 624-625 each bind FAD; that span reads PM.

Belongs to the GMC oxidoreductase family. Homodimer. Requires FAD as cofactor. Post-translationally, N-glycosylated.

It is found in the cytoplasm. The protein localises to the cytosol. The enzyme catalyses (2S-3S)-versiconal hemiacetal = versicolorin B + H2O. It carries out the reaction (S)-5'-oxoaverantin + H(+) = (1'S,5'S)-averufin + H2O. It functions in the pathway mycotoxin biosynthesis; aflatoxin biosynthesis. Its function is as follows. Dual cyclase; part of the gene cluster that mediates the biosynthesis of aflatoxins, a group of polyketide-derived furanocoumarins, and part of the most toxic and carcinogenic compounds among the known mycotoxins. The four major aflatoxins produced by A.parasiticus are aflatoxin B1 (AFB1), aflatoxin B2 (AFB2), aflatoxin G1 (AFG1) and aflatoxin G2 (AFG2). Aflk plays a dual role within the aflatoxin pathway, as a 5'-oxoaverantin cyclase that mediates conversion of 5'-oxoaverantin (OAVN) to averufin (AVF), as well as a versicolorin B synthase that converts versiconal (VAL) to versicolorin B (VERB) by closing the bisfuran ring of aflatoxin which is required for DNA-binding, thus giving to aflatoxin its activity as a mutagen. The biosynthesis of aflatoxins begins with the norsolorinic acid synthase aflC that combines a hexanoyl starter unit produced by the fatty acid synthase aflA/aflB and 7 malonyl-CoA extender units to synthesize the precursor NOR. The second step is the conversion of NOR to averantin and requires the norsolorinic acid ketoreductase aflD, which catalyzes the dehydration of norsolorinic acid to form (1'S)-averantin. The norsolorinic acid reductases aflE and aflF may also play a role in the conversion of NOR to AVN. The cytochrome P450 monooxygenase aflG then catalyzes the hydroxylation of AVN to 5'hydroxyaverantin (HAVN). The next step is performed by the 5'-hydroxyaverantin dehydrogenase aflH that transforms HAVN to 5'-oxoaverantin (OAVN) which is further converted to averufin (AVF) by aflK that plays a dual role in the pathway, as a 5'-oxoaverantin cyclase that mediates conversion of 5'-oxoaverantin, as well as a versicolorin B synthase in a later step in the pathway. The averufin oxidase aflI catalyzes the conversion of AVF to versiconal hemiacetal acetate (VHA). VHA is then the substrate for the versiconal hemiacetal acetate esterase aflJ to yield versiconal (VAL). Versicolorin B synthase aflK then converts VAL to versicolorin B (VERB) by closing the bisfuran ring of aflatoxin which is required for DNA-binding, thus giving to aflatoxin its activity as a mutagen. Then, the activity of the versicolorin B desaturase aflL leads to versicolorin A (VERA). A branch point starts from VERB since it can also be converted to dihydrodemethylsterigmatocystin (DMDHST), probably also by aflL, VERA being a precursor for aflatoxins B1 and G1, and DMDHST for aflatoxins B2 and G2. Next, the versicolorin reductase aflM and the cytochrome P450 monooxygenase aflN are involved in conversion of VERA to demethylsterigmatocystin (DMST). AflX and aflY seem also involved in this step, through probable aflX-mediated epoxide ring-opening step following versicolorin A oxidation and aflY-mediated Baeyer-Villiger oxidation required for the formation of the xanthone ring. The methyltransferase aflO then leads to the modification of DMST to sterigmatocystin (ST), and of DMDHST to dihydrosterigmatocystin (DHST). Both ST and DHST are then substrates of the O-methyltransferase aflP to yield O-methylsterigmatocystin (OMST) and dihydro-O-methylsterigmatocystin (DHOMST), respectively. Finally OMST is converted to aflatoxins B1 and G1, and DHOMST to aflatoxins B2 and G2, via the action of several enzymes including O-methylsterigmatocystin oxidoreductase aflQ, the cytochrome P450 monooxygenase aflU, but also the NADH-dependent flavin oxidoreductase nadA which is specifically required for the synthesis of AFG1. This chain is Versicolorin B synthase, found in Aspergillus parasiticus (strain ATCC 56775 / NRRL 5862 / SRRC 143 / SU-1).